Consider the following 341-residue polypeptide: Heterogeneous nuclear ribonucleoproteins A2/B1 (341 aa).

RRM domains are found at residues 9 to 92 (RKLF…ESGK) and 100 to 179 (KKLF…LSRQ). Residue Lys-10 forms a Glycyl lysine isopeptide (Lys-Gly) (interchain with G-Cter in SUMO2) linkage. A Phosphoserine modification is found at Ser-17. An Omega-N-methylarginine modification is found at Arg-26. Ser-73 carries the post-translational modification Phosphoserine. Lys-92 is subject to N6,N6-dimethyllysine; alternate. Lys-92 participates in a covalent cross-link: Glycyl lysine isopeptide (Lys-Gly) (interchain with G-Cter in SUMO2); alternate. Residues Lys-100, Lys-108, and Lys-125 each participate in a glycyl lysine isopeptide (Lys-Gly) (interchain with G-Cter in SUMO2) cross-link. The residue at position 128 (Thr-128) is a Phosphothreonine. Phosphoserine is present on Ser-137. Lys-140 is covalently cross-linked (Glycyl lysine isopeptide (Lys-Gly) (interchain with G-Cter in SUMO2)). Thr-147 is subject to Phosphothreonine. Residues Lys-156 and Lys-161 each participate in a glycyl lysine isopeptide (Lys-Gly) (interchain with G-Cter in SUMO2); alternate cross-link. 2 positions are modified to N6-acetyllysine; alternate: Lys-156 and Lys-161. Phosphothreonine is present on Thr-164. A Glycyl lysine isopeptide (Lys-Gly) (interchain with G-Cter in SUMO2) cross-link involves residue Lys-174. Phosphoserine occurs at positions 177 and 189. Residues 181–341 (MQEVQSSRSG…SGGYGGRSRY (161 aa)) are disordered. A compositionally biased stretch (gly residues) spans 190–211 (GRGGNFGFGDSRGGGGNFGPGP). Arg-191 bears the Asymmetric dimethylarginine; alternate mark. Arg-191 is modified (dimethylated arginine; alternate). Arg-191 bears the Omega-N-methylarginine; alternate mark. Phosphoserine is present on Ser-200. Asymmetric dimethylarginine; alternate is present on Arg-201. Arg-201 bears the Dimethylated arginine; alternate mark. Arg-201 is modified (omega-N-methylarginine; alternate). Residue Ser-213 is modified to Phosphoserine. Arg-216 bears the Omega-N-methylarginine mark. Phosphoserine is present on residues Ser-219 and Ser-224. Arg-226 is modified (omega-N-methylarginine). Residue Ser-247 is modified to Phosphoserine. Asymmetric dimethylarginine; alternate is present on Arg-254. Arg-254 carries the post-translational modification Omega-N-methylarginine; alternate. The segment at 296-335 (QQPSNYGPMKSGNFGGSRNMGGPYGGGNYGPGGSGGSGGY) is nuclear targeting sequence. A compositionally biased stretch (gly residues) spans 308 to 341 (NFGGSRNMGGPYGGGNYGPGGSGGSGGYGGRSRY). At Ser-312 the chain carries Phosphoserine. The residue at position 313 (Arg-313) is an Omega-N-methylarginine. Tyr-319 carries the phosphotyrosine modification. Residues Ser-329 and Ser-332 each carry the phosphoserine modification. Tyr-335 is modified (phosphotyrosine). Arg-338 carries the omega-N-methylarginine modification.

In terms of assembly, identified in the spliceosome C complex. Identified in a IGF2BP1-dependent mRNP granule complex containing untranslated mRNAs. Interacts with IGF2BP1. Interacts with C9orf72. Interacts with DGCR8. Interacts with TARDBP. Interacts with CKAP5. Interacts with PPIA/CYPA. Interacts (via C-terminus) with FAM76B; the interaction results in retention of HNRNPA2B1 in the nucleus and inhibition of the NF-kappa-B-mediated inflammatory pathway. Interacts with NF-kappa-B inhibitors NFKBIA and NFKBIE; the interaction may be mediated by the RRM2 domain of HNRNPA2B1, and HNRNPA2B1 may interact simultaneously with FAM76B and either NFKBIA or NFKBIE to form a complex. In terms of processing, sumoylated in exosomes, promoting miRNAs-binding. Asymmetric dimethylation at Arg-254 constitutes the major methylation site. According to a report, methylation affects subcellular location and promotes nuclear localization. According to another report, methylation at Arg-254 does not influence nucleocytoplasmic shuttling.

The protein resides in the nucleus. The protein localises to the nucleoplasm. Its subcellular location is the cytoplasmic granule. It localises to the secreted. It is found in the extracellular exosome. In terms of biological role, heterogeneous nuclear ribonucleoprotein (hnRNP) that associates with nascent pre-mRNAs, packaging them into hnRNP particles. The hnRNP particle arrangement on nascent hnRNA is non-random and sequence-dependent and serves to condense and stabilize the transcripts and minimize tangling and knotting. Packaging plays a role in various processes such as transcription, pre-mRNA processing, RNA nuclear export, subcellular location, mRNA translation and stability of mature mRNAs. Forms hnRNP particles with at least 20 other different hnRNP and heterogeneous nuclear RNA in the nucleus. Involved in transport of specific mRNAs to the cytoplasm in oligodendrocytes and neurons: acts by specifically recognizing and binding the A2RE (21 nucleotide hnRNP A2 response element) or the A2RE11 (derivative 11 nucleotide oligonucleotide) sequence motifs present on some mRNAs, and promotes their transport to the cytoplasm. Specifically binds single-stranded telomeric DNA sequences, protecting telomeric DNA repeat against endonuclease digestion. Also binds other RNA molecules, such as primary miRNA (pri-miRNAs): acts as a nuclear 'reader' of the N6-methyladenosine (m6A) mark by specifically recognizing and binding a subset of nuclear m6A-containing pri-miRNAs. Binding to m6A-containing pri-miRNAs promotes pri-miRNA processing by enhancing binding of DGCR8 to pri-miRNA transcripts. Involved in miRNA sorting into exosomes following sumoylation, possibly by binding (m6A)-containing pre-miRNAs. Acts as a regulator of efficiency of mRNA splicing, possibly by binding to m6A-containing pre-mRNAs. Plays a role in the splicing of pyruvate kinase PKM by binding repressively to sequences flanking PKM exon 9, inhibiting exon 9 inclusion and resulting in exon 10 inclusion and production of the PKM M2 isoform. This is Heterogeneous nuclear ribonucleoproteins A2/B1 (HNRNPA2B1) from Saguinus oedipus (Cotton-top tamarin).